Reading from the N-terminus, the 286-residue chain is Beta-lactamase SHV-2 (286 aa).

Positions 1–21 (MRYIRLCIISLLATLPLAVHA) are cleaved as a signal peptide. Catalysis depends on Ser66, which acts as the Acyl-ester intermediate. A disulfide bridge links Cys73 with Cys119. The active-site Proton acceptor is Glu164. Substrate is bound at residue 230 to 232 (KTG).

It belongs to the class-A beta-lactamase family.

The catalysed reaction is a beta-lactam + H2O = a substituted beta-amino acid. Functionally, this enzyme hydrolyzes cefotaxime, ceftazidime and other broad spectrum cephalosporins. This Klebsiella pneumoniae protein is Beta-lactamase SHV-2 (bla).